A 429-amino-acid polypeptide reads, in one-letter code: Kynureninase (429 aa).

Pyridoxal 5'-phosphate is bound by residues leucine 109, threonine 110, 137-140, aspartate 222, histidine 225, and tyrosine 247; that span reads FPSD. Residue lysine 248 is modified to N6-(pyridoxal phosphate)lysine. Residues tryptophan 278 and asparagine 306 each coordinate pyridoxal 5'-phosphate.

It belongs to the kynureninase family. In terms of assembly, homodimer. Requires pyridoxal 5'-phosphate as cofactor.

It catalyses the reaction L-kynurenine + H2O = anthranilate + L-alanine + H(+). The enzyme catalyses 3-hydroxy-L-kynurenine + H2O = 3-hydroxyanthranilate + L-alanine + H(+). The protein operates within amino-acid degradation; L-kynurenine degradation; L-alanine and anthranilate from L-kynurenine: step 1/1. It functions in the pathway cofactor biosynthesis; NAD(+) biosynthesis; quinolinate from L-kynurenine: step 2/3. Its function is as follows. Catalyzes the cleavage of L-kynurenine (L-Kyn) and L-3-hydroxykynurenine (L-3OHKyn) into anthranilic acid (AA) and 3-hydroxyanthranilic acid (3-OHAA), respectively. The chain is Kynureninase from Salinispora tropica (strain ATCC BAA-916 / DSM 44818 / JCM 13857 / NBRC 105044 / CNB-440).